The following is a 209-amino-acid chain: FMN-dependent NADH:quinone oxidoreductase 2 (209 aa).

17–19 provides a ligand contact to FMN; sequence SAS.

The protein belongs to the azoreductase type 1 family. In terms of assembly, homodimer. FMN serves as cofactor.

It catalyses the reaction 2 a quinone + NADH + H(+) = 2 a 1,4-benzosemiquinone + NAD(+). The enzyme catalyses N,N-dimethyl-1,4-phenylenediamine + anthranilate + 2 NAD(+) = 2-(4-dimethylaminophenyl)diazenylbenzoate + 2 NADH + 2 H(+). Functionally, quinone reductase that provides resistance to thiol-specific stress caused by electrophilic quinones. Also exhibits azoreductase activity. Catalyzes the reductive cleavage of the azo bond in aromatic azo compounds to the corresponding amines. The protein is FMN-dependent NADH:quinone oxidoreductase 2 of Lactiplantibacillus plantarum (strain ATCC BAA-793 / NCIMB 8826 / WCFS1) (Lactobacillus plantarum).